A 572-amino-acid chain; its full sequence is Asparagine synthetase [glutamine-hydrolyzing] 1 (572 aa).

The active-site For GATase activity is C2. The Glutamine amidotransferase type-2 domain occupies 2–186; that stretch reads CGIFAAFRHE…PGHVYDSKTD (185 aa). Residues 49-53, 74-76, and D97 each bind L-glutamine; these read RLAIV and NGE. Positions 194–546 constitute an Asparagine synthetase domain; it reads PDWLDEKRIP…QKTVADTVMR (353 aa). Residue L233 participates in ATP binding. Residue S265 is modified to Phosphoserine. Residues I292 and 366–367 each bind ATP; that span reads SG. At S509 the chain carries Phosphoserine.

It carries out the reaction L-aspartate + L-glutamine + ATP + H2O = L-asparagine + L-glutamate + AMP + diphosphate + H(+). Its pathway is amino-acid biosynthesis; L-asparagine biosynthesis; L-asparagine from L-aspartate (L-Gln route): step 1/1. This is Asparagine synthetase [glutamine-hydrolyzing] 1 (ASN1) from Saccharomyces cerevisiae (strain ATCC 204508 / S288c) (Baker's yeast).